The sequence spans 355 residues: 3-isopropylmalate dehydrogenase (355 aa).

Residues R90, R100, R128, and D222 each coordinate substrate. Residues D222, D246, and D250 each coordinate Mg(2+). 280 to 292 (GSAPDIAGKGVAN) contacts NAD(+).

It belongs to the isocitrate and isopropylmalate dehydrogenases family. LeuB type 1 subfamily. Homodimer. Mg(2+) is required as a cofactor. It depends on Mn(2+) as a cofactor.

It localises to the cytoplasm. It carries out the reaction (2R,3S)-3-isopropylmalate + NAD(+) = 4-methyl-2-oxopentanoate + CO2 + NADH. It participates in amino-acid biosynthesis; L-leucine biosynthesis; L-leucine from 3-methyl-2-oxobutanoate: step 3/4. Its function is as follows. Catalyzes the oxidation of 3-carboxy-2-hydroxy-4-methylpentanoate (3-isopropylmalate) to 3-carboxy-4-methyl-2-oxopentanoate. The product decarboxylates to 4-methyl-2 oxopentanoate. The protein is 3-isopropylmalate dehydrogenase of Cupriavidus metallidurans (strain ATCC 43123 / DSM 2839 / NBRC 102507 / CH34) (Ralstonia metallidurans).